Reading from the N-terminus, the 270-residue chain is 27 kDa core protein (270 aa).

This sequence belongs to the chordopoxvirinae D3 family.

The protein resides in the virion. Its function is as follows. Late protein which is part of a large complex required for early virion morphogenesis. This complex participates in the formation of virosomes and the incorporation of virosomal contents into nascent immature virions. The sequence is that of 27 kDa core protein from Vertebrata (FPV).